Consider the following 660-residue polypeptide: Bifunctional polymyxin resistance protein ArnA (660 aa).

Residues 1–304 (MKAVIFAYHD…TLGLVAGARL (304 aa)) form a formyltransferase ArnAFT region. Catalysis depends on H104, which acts as the Proton donor; for formyltransferase activity. (6R)-10-formyltetrahydrofolate-binding positions include R114 and 136–140 (VKRAD). Residues 314–660 (RRIRVLILGV…RSVDVAERAS (347 aa)) form a dehydrogenase ArnADH region. NAD(+) is bound by residues D347 and 368 to 369 (DI). UDP-alpha-D-glucuronate contacts are provided by residues A393, Y398, and 432–433 (TS). E434 serves as the catalytic Proton acceptor; for decarboxylase activity. UDP-alpha-D-glucuronate is bound by residues R460, N492, 526–535 (KLIDGGQQKR), and Y613. The active-site Proton donor; for decarboxylase activity is the R619.

In the N-terminal section; belongs to the Fmt family. UDP-L-Ara4N formyltransferase subfamily. The protein in the C-terminal section; belongs to the NAD(P)-dependent epimerase/dehydratase family. UDP-glucuronic acid decarboxylase subfamily. As to quaternary structure, homohexamer, formed by a dimer of trimers.

The catalysed reaction is UDP-alpha-D-glucuronate + NAD(+) = UDP-beta-L-threo-pentopyranos-4-ulose + CO2 + NADH. It catalyses the reaction UDP-4-amino-4-deoxy-beta-L-arabinose + (6R)-10-formyltetrahydrofolate = UDP-4-deoxy-4-formamido-beta-L-arabinose + (6S)-5,6,7,8-tetrahydrofolate + H(+). It participates in nucleotide-sugar biosynthesis; UDP-4-deoxy-4-formamido-beta-L-arabinose biosynthesis; UDP-4-deoxy-4-formamido-beta-L-arabinose from UDP-alpha-D-glucuronate: step 1/3. Its pathway is nucleotide-sugar biosynthesis; UDP-4-deoxy-4-formamido-beta-L-arabinose biosynthesis; UDP-4-deoxy-4-formamido-beta-L-arabinose from UDP-alpha-D-glucuronate: step 3/3. It functions in the pathway bacterial outer membrane biogenesis; lipopolysaccharide biosynthesis. Functionally, bifunctional enzyme that catalyzes the oxidative decarboxylation of UDP-glucuronic acid (UDP-GlcUA) to UDP-4-keto-arabinose (UDP-Ara4O) and the addition of a formyl group to UDP-4-amino-4-deoxy-L-arabinose (UDP-L-Ara4N) to form UDP-L-4-formamido-arabinose (UDP-L-Ara4FN). The modified arabinose is attached to lipid A and is required for resistance to polymyxin and cationic antimicrobial peptides. This is Bifunctional polymyxin resistance protein ArnA from Salmonella dublin (strain CT_02021853).